The sequence spans 206 residues: Large ribosomal subunit protein bL25 (206 aa).

The bL25 domain stretch occupies residues 1–91 (MEYRLKAYYR…RPEHVDFFVL (91 aa)). The CTC domain stretch occupies residues 92–206 (SDEPVEMYVP…IKKGKEEEEE (115 aa)). A disordered region spans residues 184-206 (AEEAAAEVAEPEVIKKGKEEEEE). A compositionally biased stretch (basic and acidic residues) spans 195-206 (EVIKKGKEEEEE).

The protein belongs to the bacterial ribosomal protein bL25 family. CTC subfamily. In terms of assembly, part of the 50S ribosomal subunit. Contacts the 5S rRNA.

Functionally, this is one of 3 proteins that mediate the attachment of the 5S rRNA onto the large ribosomal subunit. The chain is Large ribosomal subunit protein bL25 (rplY) from Thermus thermophilus.